A 338-amino-acid polypeptide reads, in one-letter code: Methionine synthase (338 aa).

Residues H210, C212, E234, and C294 each contribute to the Zn(2+) site.

This sequence belongs to the archaeal MetE family. The cofactor is Zn(2+).

The protein operates within amino-acid biosynthesis; L-methionine biosynthesis via de novo pathway. Functionally, catalyzes the transfer of a methyl group to L-homocysteine resulting in methionine formation. The physiological methyl donor is unknown. The chain is Methionine synthase from Pyrococcus furiosus (strain ATCC 43587 / DSM 3638 / JCM 8422 / Vc1).